The sequence spans 351 residues: Probable dual-specificity RNA methyltransferase RlmN (351 aa).

Glutamate 92 serves as the catalytic Proton acceptor. The 235-residue stretch at 98–332 folds into the Radical SAM core domain; that stretch reads TDQRLTVCIS…VSLRASRGLD (235 aa). The cysteines at positions 105 and 337 are disulfide-linked. Residues cysteine 112, cysteine 116, and cysteine 119 each contribute to the [4Fe-4S] cluster site. S-adenosyl-L-methionine is bound by residues 159–160, serine 189, 218–220, and asparagine 294; these read GE and SLH. Residue cysteine 337 is the S-methylcysteine intermediate of the active site.

This sequence belongs to the radical SAM superfamily. RlmN family. [4Fe-4S] cluster serves as cofactor.

The protein localises to the cytoplasm. The enzyme catalyses adenosine(2503) in 23S rRNA + 2 reduced [2Fe-2S]-[ferredoxin] + 2 S-adenosyl-L-methionine = 2-methyladenosine(2503) in 23S rRNA + 5'-deoxyadenosine + L-methionine + 2 oxidized [2Fe-2S]-[ferredoxin] + S-adenosyl-L-homocysteine. It carries out the reaction adenosine(37) in tRNA + 2 reduced [2Fe-2S]-[ferredoxin] + 2 S-adenosyl-L-methionine = 2-methyladenosine(37) in tRNA + 5'-deoxyadenosine + L-methionine + 2 oxidized [2Fe-2S]-[ferredoxin] + S-adenosyl-L-homocysteine. Its function is as follows. Specifically methylates position 2 of adenine 2503 in 23S rRNA and position 2 of adenine 37 in tRNAs. The polypeptide is Probable dual-specificity RNA methyltransferase RlmN (Synechococcus sp. (strain CC9902)).